The primary structure comprises 436 residues: 3-oxo-tetronate kinase (436 aa).

ATP contacts are provided by residues Ser-272, 372-375 (GGET), and Gly-415.

This sequence belongs to the four-carbon acid sugar kinase family.

The enzyme catalyses 3-dehydro-L-erythronate + ATP = 3-dehydro-4-O-phospho-L-erythronate + ADP + H(+). It catalyses the reaction 3-dehydro-D-erythronate + ATP = 3-dehydro-4-O-phospho-D-erythronate + ADP + H(+). In terms of biological role, catalyzes the ATP-dependent phosphorylation of 3-oxo-tetronate to 3-oxo-tetronate 4-phosphate. This chain is 3-oxo-tetronate kinase, found in Brucella melitensis biotype 1 (strain ATCC 23456 / CCUG 17765 / NCTC 10094 / 16M).